Here is a 142-residue protein sequence, read N- to C-terminus: Baculoviral IAP repeat-containing protein 5 (142 aa).

Residues 18–88 form a BIR repeat; that stretch reads RISTFKNWPF…KHSSGCAFLS (71 aa). A Phosphoserine; by AURKC modification is found at Ser20. Lys23 carries the N6-acetyllysine modification. Thr34 carries the phosphothreonine; by CDK1 and CDK15 modification. Phosphothreonine is present on Thr48. The Zn(2+) site is built by Cys57, Cys60, His77, and Cys84. N6-acetyllysine is present on residues Lys90, Lys110, Lys112, and Lys115. A Phosphothreonine; by AURKB modification is found at Thr117. Lys129 is modified (N6-acetyllysine).

This sequence belongs to the IAP family. Monomer or homodimer. Exists as a homodimer in the apo state and as a monomer in the CPC-bound state. The monomer protects cells against apoptosis more efficiently than the dimer. Only the dimeric form is capable of enhancing tubulin stability in cells. When phosphorylated, interacts with LAMTOR5/HBXIP; the resulting complex binds pro-CASP9, as well as active CASP9, but much less efficiently. Component of the chromosomal passenger complex (CPC) composed of at least BIRC5/survivin, CDCA8/borealin, INCENP, AURKB or AURKC; in the complex forms a triple-helix bundle-based subcomplex with INCENP and CDCA8. Interacts with JTB. Interacts (via BIR domain) with histone H3 phosphorylated at 'Thr-3' (H3pT3). Interacts with EVI5. Interacts with GTP-bound RAN in both the S and M phases of the cell cycle. Interacts with USP9X. Interacts with tubulin. Interacts with BIRC2/c-IAP1. The acetylated form at Lys-129 interacts with STAT3. The monomeric form deacetylated at Lys-129 interacts with XPO1/CRM1. The monomeric form interacts with XIAP/BIRC4. Both the dimeric and monomeric form can interact with DIABLO/SMAC. Interacts with BIRC6/bruce. Interacts with FBXL7; this interaction facilitates the polyubiquitination and subsequent proteasomal degradation of BIRC5 by the SCF(FBXL7) E3 ubiquitin-protein ligase complex. In terms of processing, ubiquitinated by the Cul9-RING ubiquitin-protein ligase complex, leading to its degradation. Ubiquitination is required for centrosomal targeting. Deubiquitinated by USP35 or USP38; leading to stabilization. Post-translationally, acetylation at Lys-129 results in its homodimerization, while deacetylation promotes the formation of monomers which heterodimerize with XPO1/CRM1 which facilitates its nuclear export. The acetylated form represses STAT3 transactivation. The dynamic equilibrium between its acetylation and deacetylation at Lys-129 determines its interaction with XPO1/CRM1, its subsequent subcellular localization, and its ability to inhibit STAT3 transactivation. In vitro phosphorylation at Thr-117 by AURKB prevents interaction with INCENP and localization to mitotic chromosomes. Phosphorylation at Thr-48 by CK2 is critical for its mitotic and anti-apoptotic activities. Phosphorylation at Thr-34 by CDK15 is critical for its anti-apoptotic activity. Phosphorylation at Ser-20 by AURKC is critical for regulation of proper chromosome alignment and segregation, and possibly cytokinesis.

The protein resides in the cytoplasm. It localises to the nucleus. It is found in the chromosome. The protein localises to the centromere. Its subcellular location is the cytoskeleton. The protein resides in the spindle. It localises to the kinetochore. It is found in the midbody. Multitasking protein that has dual roles in promoting cell proliferation and preventing apoptosis. Component of a chromosome passage protein complex (CPC) which is essential for chromosome alignment and segregation during mitosis and cytokinesis. Acts as an important regulator of the localization of this complex; directs CPC movement to different locations from the inner centromere during prometaphase to midbody during cytokinesis and participates in the organization of the center spindle by associating with polymerized microtubules. Involved in the recruitment of CPC to centromeres during early mitosis via association with histone H3 phosphorylated at 'Thr-3' (H3pT3) during mitosis. The complex with RAN plays a role in mitotic spindle formation by serving as a physical scaffold to help deliver the RAN effector molecule TPX2 to microtubules. May counteract a default induction of apoptosis in G2/M phase. The acetylated form represses STAT3 transactivation of target gene promoters. May play a role in neoplasia. Inhibitor of CASP3 and CASP7. Essential for the maintenance of mitochondrial integrity and function. In Pongo abelii (Sumatran orangutan), this protein is Baculoviral IAP repeat-containing protein 5 (BIRC5).